The primary structure comprises 125 residues: Small ribosomal subunit protein uS12 (125 aa).

3-methylthioaspartic acid is present on Asp-89.

It belongs to the universal ribosomal protein uS12 family. Part of the 30S ribosomal subunit. Contacts proteins S8 and S17. May interact with IF1 in the 30S initiation complex.

Functionally, with S4 and S5 plays an important role in translational accuracy. Interacts with and stabilizes bases of the 16S rRNA that are involved in tRNA selection in the A site and with the mRNA backbone. Located at the interface of the 30S and 50S subunits, it traverses the body of the 30S subunit contacting proteins on the other side and probably holding the rRNA structure together. The combined cluster of proteins S8, S12 and S17 appears to hold together the shoulder and platform of the 30S subunit. The polypeptide is Small ribosomal subunit protein uS12 (Cupriavidus pinatubonensis (strain JMP 134 / LMG 1197) (Cupriavidus necator (strain JMP 134))).